The sequence spans 906 residues: Protein translocase subunit SecA (906 aa).

ATP is bound by residues Q86, 104-108 (GEGKT), and D499. A disordered region spans residues 862–887 (KPVVSRIDPKDRNPDDPTSWGRVSRN). The Zn(2+) site is built by C890, C892, C901, and H902.

It belongs to the SecA family. As to quaternary structure, monomer and homodimer. Part of the essential Sec protein translocation apparatus which comprises SecA, SecYEG and auxiliary proteins SecDF-YajC and YidC. Zn(2+) serves as cofactor.

It is found in the cell inner membrane. The protein localises to the cytoplasm. It carries out the reaction ATP + H2O + cellular proteinSide 1 = ADP + phosphate + cellular proteinSide 2.. In terms of biological role, part of the Sec protein translocase complex. Interacts with the SecYEG preprotein conducting channel. Has a central role in coupling the hydrolysis of ATP to the transfer of proteins into and across the cell membrane, serving both as a receptor for the preprotein-SecB complex and as an ATP-driven molecular motor driving the stepwise translocation of polypeptide chains across the membrane. The sequence is that of Protein translocase subunit SecA from Rickettsia peacockii (strain Rustic).